The primary structure comprises 338 residues: CRISPR-associated endonuclease Cas1 (338 aa).

Residues glutamate 165, histidine 230, and glutamate 245 each coordinate Mn(2+).

The protein belongs to the CRISPR-associated endonuclease Cas1 family. Homodimer, forms a heterotetramer with a Cas2 homodimer. Requires Mg(2+) as cofactor. Mn(2+) is required as a cofactor.

Its function is as follows. CRISPR (clustered regularly interspaced short palindromic repeat), is an adaptive immune system that provides protection against mobile genetic elements (viruses, transposable elements and conjugative plasmids). CRISPR clusters contain spacers, sequences complementary to antecedent mobile elements, and target invading nucleic acids. CRISPR clusters are transcribed and processed into CRISPR RNA (crRNA). Acts as a dsDNA endonuclease. Involved in the integration of spacer DNA into the CRISPR cassette. The protein is CRISPR-associated endonuclease Cas1 of Fusobacterium nucleatum subsp. nucleatum (strain ATCC 25586 / DSM 15643 / BCRC 10681 / CIP 101130 / JCM 8532 / KCTC 2640 / LMG 13131 / VPI 4355).